The primary structure comprises 351 residues: Phenoloxidase-activating factor 3 (351 aa).

The first 19 residues, 1 to 19 (MWLSLVILGVASAIVNVST), serve as a signal peptide directing secretion. Asparagine 16 carries N-linked (GlcNAc...) asparagine glycosylation. One can recognise a Clip domain in the interval 22 to 73 (SCTTPNGETATCLPIESCKIFWDYVVTSGADPEINSFLRASLCRQGNYVVCC). Intrachain disulfides connect cysteine 23–cysteine 72, cysteine 33–cysteine 64, cysteine 39–cysteine 73, cysteine 89–cysteine 224, cysteine 127–cysteine 143, cysteine 167–cysteine 176, cysteine 268–cysteine 285, and cysteine 295–cysteine 326. The Peptidase S1 domain maps to 97–350 (VLGGEDTDLG…HLDWIKQNVR (254 aa)). Histidine 142 acts as the Charge relay system in catalysis. Positions 158, 160, 163, and 166 each coordinate Ca(2+). The active-site Charge relay system is aspartate 204. The active-site Charge relay system is serine 299.

The protein belongs to the peptidase S1 family. CLIP subfamily. In the active form, heterodimer of a light chain and a heavy chain; disulfide-linked. Post-translationally, proteolytically cleaved.

Its subcellular location is the secreted. Cleavage of PPAF2 is Ca(2+)-independent. Inhibited by heparin. In terms of biological role, serine endopeptidase which, by cleaving prophenoloxidase activating factor PPAF2, is required for the activation of the prophenoloxidase cascade probably following the recognition of pathogen-derived products. This is Phenoloxidase-activating factor 3 from Holotrichia diomphalia (Korean black chafer).